A 718-amino-acid polypeptide reads, in one-letter code: Kinesin-like protein KIF2C (718 aa).

Positions 1-248 are globular; sequence MESLPARLFP…CHPLTLTDPT (248 aa). Phosphoserine occurs at positions 3 and 19. Residues 86 to 111 are disordered; the sequence is PKQKRRSVNSKIPAPKEGLRSRSTRM. Phosphoserine; by AURKB is present on Ser92. The Microtubule tip localization signal signature appears at 95–98; it reads SKIP. Phosphoserine occurs at positions 106, 108, 112, 163, and 186. The negative regulator of microtubule-binding stretch occupies residues 201 to 232; it reads EKRAQNSEIRIKRAQEYDSSFPNWEFARMIKE. In terms of domain architecture, Kinesin motor spans 252 to 582; it reads RICVCVRKRP…LRYADRVKEL (331 aa). ATP is bound by residues Arg258 and 342–349; that span reads GQTGSGKT. Residues 409–412 carry the Nuclear localization signal motif; sequence KKAK. Residues Ser513 and Ser626 each carry the phosphoserine modification. Coiled coils occupy residues 613-651 and 689-716; these read NFKEEEELSSQMSSFNEAMSQIRELEERAMEELREIIQQ and ALREVIKALRVAMQLEEQASKQMNSKKR.

This sequence belongs to the TRAFAC class myosin-kinesin ATPase superfamily. Kinesin family. MCAK/KIF2 subfamily. As to quaternary structure, interacts with CENPH. Interacts with MTUS2/TIP150; the interaction is direct. Interacts with MAPRE1; the interaction is direct, regulated by phosphorylation and is probably required for targeting to growing microtubule plus ends. Interacts with KIF18B at microtubule tips; this interaction increases the affinity of both partners for microtubule plus ends and is required for robust microtubule depolymerization. Phosphorylation by AURKA or AURKB strongly reduces KIF18B-binding. Post-translationally, phosphorylation by AURKB, regulates association with centromeres and kinetochores and the microtubule depolymerization activity. Ubiquitinated.

Its subcellular location is the cytoplasm. The protein localises to the cytoskeleton. It localises to the nucleus. It is found in the chromosome. The protein resides in the centromere. Its subcellular location is the kinetochore. In terms of biological role, in complex with KIF18B, constitutes the major microtubule plus-end depolymerizing activity in mitotic cells. Regulates the turnover of microtubules at the kinetochore and functions in chromosome segregation during mitosis. Plays a role in chromosome congression and is required for the lateral to end-on conversion of the chromosome-microtubule attachment. The polypeptide is Kinesin-like protein KIF2C (KIF2C) (Cricetulus griseus (Chinese hamster)).